Reading from the N-terminus, the 210-residue chain is Protein VNG_2543C (210 aa).

The region spanning 12–206 (EDGARTVELA…ETGDEDDPVE (195 aa)) is the AMMECR1 domain.

This Halobacterium salinarum (strain ATCC 700922 / JCM 11081 / NRC-1) (Halobacterium halobium) protein is Protein VNG_2543C.